We begin with the raw amino-acid sequence, 537 residues long: Extracellular exo-inulinase (537 aa).

The first 19 residues, 1–19 (MAPLSKALSVFMLMGITYA), serve as a signal peptide directing secretion. Asn-40 and Asp-41 together coordinate beta-D-fructose. The active-site Nucleophile is the Asp-41. An N-linked (GlcNAc...) asparagine glycan is attached at Asn-49. Beta-D-fructose-binding residues include Gln-57 and Trp-65. An N-linked (GlcNAc...) asparagine glycan is attached at Asn-67. Ser-103 provides a ligand contact to beta-D-fructose. Asn-111 and Asn-112 each carry an N-linked (GlcNAc...) asparagine glycan. The beta-D-fructose site is built by Arg-188, Asp-189, and Glu-241. The Proton donor/acceptor role is filled by Glu-241. 2 N-linked (GlcNAc...) asparagine glycosylation sites follow: Asn-254 and Asn-300. Trp-335 is a beta-D-fructose binding site. 2 N-linked (GlcNAc...) asparagine glycosylation sites follow: Asn-398 and Asn-430.

It belongs to the glycosyl hydrolase 32 family.

It is found in the secreted. It catalyses the reaction Hydrolysis of terminal, non-reducing (2-&gt;1)- and (2-&gt;6)-linked beta-D-fructofuranose residues in fructans.. Functionally, exo-inulinase involved in utilization of the plant storage polymer inulin, consisting of fructooligosaccharides with a degree of polymerization (DP) value from 2 to 60. Splits off terminal fructose units successively from the non-reducing end of the inulin molecule, and also hydrolyzes levan, stachyose and raffinose. Hydrolyzes both beta-2,1- as well as beta-2,6-fructosyl linkages in fructooligosaccharides. This is Extracellular exo-inulinase from Aspergillus awamori (Black koji mold).